The sequence spans 30 residues: Protein ScvA (30 aa).

Positions 1–30 (MERQNVQQQRGKDQRPQRPGASNPRRPNQR) are disordered.

Its function is as follows. Might be involved in DNA-binding; the protein binds DNA in gel-shift assays and immunogold electron microscopy shows labelling of condensed chromatin. The sequence is that of Protein ScvA (scvA) from Coxiella burnetii (strain RSA 493 / Nine Mile phase I).